A 473-amino-acid polypeptide reads, in one-letter code: Ribulose bisphosphate carboxylase large chain (473 aa).

Asparagine 116 and threonine 166 together coordinate substrate. Lysine 168 acts as the Proton acceptor in catalysis. Substrate is bound at residue lysine 170. Mg(2+)-binding residues include lysine 194, aspartate 196, and glutamate 197. Position 194 is an N6-carboxylysine (lysine 194). Residue histidine 287 is the Proton acceptor of the active site. Substrate is bound by residues arginine 288, histidine 320, and serine 372.

This sequence belongs to the RuBisCO large chain family. Type I subfamily. As to quaternary structure, heterohexadecamer of 8 large chains and 8 small chains. Mg(2+) serves as cofactor.

It carries out the reaction 2 (2R)-3-phosphoglycerate + 2 H(+) = D-ribulose 1,5-bisphosphate + CO2 + H2O. The catalysed reaction is D-ribulose 1,5-bisphosphate + O2 = 2-phosphoglycolate + (2R)-3-phosphoglycerate + 2 H(+). In terms of biological role, ruBisCO catalyzes two reactions: the carboxylation of D-ribulose 1,5-bisphosphate, the primary event in carbon dioxide fixation, as well as the oxidative fragmentation of the pentose substrate. Both reactions occur simultaneously and in competition at the same active site. This Hydrogenophaga pseudoflava (Pseudomonas carboxydoflava) protein is Ribulose bisphosphate carboxylase large chain.